A 179-amino-acid chain; its full sequence is ATP-dependent protease subunit HslV (179 aa).

The active site involves threonine 8. Na(+) contacts are provided by glycine 163, cysteine 166, and threonine 169.

The protein belongs to the peptidase T1B family. HslV subfamily. As to quaternary structure, a double ring-shaped homohexamer of HslV is capped on each side by a ring-shaped HslU homohexamer. The assembly of the HslU/HslV complex is dependent on binding of ATP.

The protein localises to the cytoplasm. It carries out the reaction ATP-dependent cleavage of peptide bonds with broad specificity.. Allosterically activated by HslU binding. Functionally, protease subunit of a proteasome-like degradation complex believed to be a general protein degrading machinery. The polypeptide is ATP-dependent protease subunit HslV (Solibacter usitatus (strain Ellin6076)).